A 124-amino-acid polypeptide reads, in one-letter code: Small ribosomal subunit protein uS12 (124 aa).

Asp89 is modified (3-methylthioaspartic acid). A disordered region spans residues Asp103–Ser124. Residues Gln108–Ser124 show a composition bias toward basic residues.

This sequence belongs to the universal ribosomal protein uS12 family. In terms of assembly, part of the 30S ribosomal subunit. Contacts proteins S8 and S17. May interact with IF1 in the 30S initiation complex.

Functionally, with S4 and S5 plays an important role in translational accuracy. In terms of biological role, interacts with and stabilizes bases of the 16S rRNA that are involved in tRNA selection in the A site and with the mRNA backbone. Located at the interface of the 30S and 50S subunits, it traverses the body of the 30S subunit contacting proteins on the other side and probably holding the rRNA structure together. The combined cluster of proteins S8, S12 and S17 appears to hold together the shoulder and platform of the 30S subunit. The chain is Small ribosomal subunit protein uS12 from Methylococcus capsulatus (strain ATCC 33009 / NCIMB 11132 / Bath).